The sequence spans 354 residues: Ornithine carbamoyltransferase, catabolic (354 aa).

Carbamoyl phosphate is bound by residues 67-70, Gln94, Arg118, and 145-148; these read STRT and HPTQ. Residues Asn177, Asp241, and 245–246 each bind L-ornithine; that span reads SM. Residues 284 to 285 and Arg329 each bind carbamoyl phosphate; that span reads CL.

This sequence belongs to the aspartate/ornithine carbamoyltransferase superfamily. OTCase family.

It localises to the cytoplasm. It carries out the reaction carbamoyl phosphate + L-ornithine = L-citrulline + phosphate + H(+). It participates in amino-acid degradation; L-arginine degradation via ADI pathway; carbamoyl phosphate from L-arginine: step 2/2. Functionally, reversibly catalyzes the transfer of the carbamoyl group from carbamoyl phosphate (CP) to the N(epsilon) atom of ornithine (ORN) to produce L-citrulline. The protein is Ornithine carbamoyltransferase, catabolic (arcB) of Lactococcus lactis subsp. lactis (strain IL1403) (Streptococcus lactis).